Consider the following 340-residue polypeptide: Ketol-acid reductoisomerase (NADP(+)) (340 aa).

Residues 3–182 (VTMYYEDDVE…GCARVGIIET (180 aa)) enclose the KARI N-terminal Rossmann domain. Residues 26-29 (YGSQ), Arg49, Ser53, and 83-86 (DELQ) each bind NADP(+). Residue His108 is part of the active site. Gly134 is a binding site for NADP(+). Residues 183–328 (TFKEETEEDL…AELRKAMPFT (146 aa)) enclose the KARI C-terminal knotted domain. Positions 191, 195, 227, and 231 each coordinate Mg(2+). A substrate-binding site is contributed by Ser252.

The protein belongs to the ketol-acid reductoisomerase family. Mg(2+) is required as a cofactor.

It carries out the reaction (2R)-2,3-dihydroxy-3-methylbutanoate + NADP(+) = (2S)-2-acetolactate + NADPH + H(+). It catalyses the reaction (2R,3R)-2,3-dihydroxy-3-methylpentanoate + NADP(+) = (S)-2-ethyl-2-hydroxy-3-oxobutanoate + NADPH + H(+). It participates in amino-acid biosynthesis; L-isoleucine biosynthesis; L-isoleucine from 2-oxobutanoate: step 2/4. Its pathway is amino-acid biosynthesis; L-valine biosynthesis; L-valine from pyruvate: step 2/4. Involved in the biosynthesis of branched-chain amino acids (BCAA). Catalyzes an alkyl-migration followed by a ketol-acid reduction of (S)-2-acetolactate (S2AL) to yield (R)-2,3-dihydroxy-isovalerate. In the isomerase reaction, S2AL is rearranged via a Mg-dependent methyl migration to produce 3-hydroxy-3-methyl-2-ketobutyrate (HMKB). In the reductase reaction, this 2-ketoacid undergoes a metal-dependent reduction by NADPH to yield (R)-2,3-dihydroxy-isovalerate. In Lactococcus lactis subsp. lactis (strain IL1403) (Streptococcus lactis), this protein is Ketol-acid reductoisomerase (NADP(+)).